The chain runs to 175 residues: Short chain dehydrogenase/reductase dpmpG (175 aa).

Residues Ile18, Asp71, Asn98, and Lys132 each coordinate NADP(+).

The protein belongs to the short-chain dehydrogenases/reductases (SDR) family.

The protein operates within secondary metabolite biosynthesis; terpenoid biosynthesis. Short chain dehydrogenase/reductase; part of the gene cluster that mediates the biosynthesis of diterpenoid pyrones. The first step of the pathway is the synthesis of the alpha-pyrone moiety by the polyketide synthase dpmpA via condensation of one acetyl-CoA starter unit with 3 malonyl-CoA units and 2 methylations. The alpha-pyrone is then combined with geranylgeranyl pyrophosphate (GGPP) formed by the GGPP synthase dpmpD through the action of the prenyltransferase dpmpC to yield a linear alpha-pyrone diterpenoid. Subsequent steps in the diterpenoid pyrone biosynthetic pathway involve the decalin core formation, which is initiated by the epoxidation of the C10-C11 olefin by the FAD-dependent oxidoreductase dpmpE, and is followed by a cyclization cascade catalyzed by the terpene cyclase dpmpB. The short chain dehydrogenase/reductase dpmpG then oxidizes the 8S hydroxy group to a ketone and the short chain dehydrogenase/reductase dpmpH reduces the ketone to the 8R hydroxy group to yield higginsianin B. Higginsianin B is further methylated by the methyltransferase dpmpI to produce the intermediate named FDDP B. The cytochrome P450 monooxygenase dpmpJ then oxidizes the C-26 methyl to primary alcohol, producing the final diterpenoid pyrone with a C-26 primary alcohol on the gamma-pyrone moiety named FDDP C. This is Short chain dehydrogenase/reductase dpmpG from Macrophomina phaseolina (strain MS6) (Charcoal rot fungus).